We begin with the raw amino-acid sequence, 234 residues long: Large ribosomal subunit protein eL6 (234 aa).

It belongs to the eukaryotic ribosomal protein eL6 family.

This chain is Large ribosomal subunit protein eL6 (RPL6), found in Mesembryanthemum crystallinum (Common ice plant).